The following is a 366-amino-acid chain: uncharacterized protein (366 aa).

Positions 1-135 (MNQTGRTIGG…PPKNVDTIDK (135 aa)) are disordered. The span at 26–38 (PSEDRVSSRDETP) shows a compositional bias: basic and acidic residues. Ser-69 carries the phosphoserine modification. A Phosphothreonine modification is found at Thr-76. A Glycyl lysine isopeptide (Lys-Gly) (interchain with G-Cter in ubiquitin) cross-link involves residue Lys-78. Residues 97–108 (QHNHHHHRRTSH) are compositionally biased toward basic residues. Residue Lys-187 forms a Glycyl lysine isopeptide (Lys-Gly) (interchain with G-Cter in ubiquitin) linkage. Thr-189 bears the Phosphothreonine mark. A Glycyl lysine isopeptide (Lys-Gly) (interchain with G-Cter in ubiquitin) cross-link involves residue Lys-242. Residues Ser-288 and Ser-294 each carry the phosphoserine modification. The disordered stretch occupies residues 313 to 366 (THSGHLEQKDVDDNRTSVPVTATQGSGHEDVVKKENTGNKLLRRVKSLKTSKKH). Residues 316–327 (GHLEQKDVDDNR) show a composition bias toward basic and acidic residues. The segment covering 328-338 (TSVPVTATQGS) has biased composition (polar residues). The span at 339 to 349 (GHEDVVKKENT) shows a compositional bias: basic and acidic residues. Positions 353–366 (LLRRVKSLKTSKKH) are enriched in basic residues. Ser-359 carries the post-translational modification Phosphoserine.

The protein belongs to the pal1 family.

The protein localises to the cytoplasm. The protein resides in the nucleus. This is an uncharacterized protein from Saccharomyces cerevisiae (strain ATCC 204508 / S288c) (Baker's yeast).